The chain runs to 488 residues: Glutamyl-tRNA(Gln) amidotransferase subunit A (488 aa).

Active-site charge relay system residues include lysine 77 and serine 152. Serine 176 functions as the Acyl-ester intermediate in the catalytic mechanism.

Belongs to the amidase family. GatA subfamily. In terms of assembly, heterotrimer of A, B and C subunits.

It catalyses the reaction L-glutamyl-tRNA(Gln) + L-glutamine + ATP + H2O = L-glutaminyl-tRNA(Gln) + L-glutamate + ADP + phosphate + H(+). Functionally, allows the formation of correctly charged Gln-tRNA(Gln) through the transamidation of misacylated Glu-tRNA(Gln) in organisms which lack glutaminyl-tRNA synthetase. The reaction takes place in the presence of glutamine and ATP through an activated gamma-phospho-Glu-tRNA(Gln). The chain is Glutamyl-tRNA(Gln) amidotransferase subunit A from Streptococcus mutans serotype c (strain ATCC 700610 / UA159).